A 67-amino-acid polypeptide reads, in one-letter code: Large ribosomal subunit protein uL29 (67 aa).

Belongs to the universal ribosomal protein uL29 family.

The sequence is that of Large ribosomal subunit protein uL29 from Cereibacter sphaeroides (strain ATCC 17025 / ATH 2.4.3) (Rhodobacter sphaeroides).